A 309-amino-acid polypeptide reads, in one-letter code: MAQQEVVEGFKFEQRHGKERVRVARVWKTRQGQHFIVEWRVGITLFSDCVNSYLRDDNSDIVATDTMKNTVYAKAKECSDILSAEEFAILLAKHFVSFYQKVTGAIVNIVEKPWERVTVDGQPHEHGFKLGSEKHTTEAIVQKSGSLQLTSGIEGLSVLKTTQSGFVNFIRDKYTALPDTRERMVATEVTALWRYSYESLYSLPQKPLYFTEKYQEVKKVLADTFFGPPKGGVYSPSVQNTLYLMAKATLNRFPDIAYVSLKLPNLHFIPVNISNQDGPIVKFEDDVYLPTDEPHGSIQASLSRLWSKL.

Residues Lys-18 and Thr-64 each act as charge relay system in the active site. Urate is bound by residues Thr-64, Asp-65, Phe-166, Arg-183, Val-238, Gln-239, and Asn-265. Catalysis depends on His-267, which acts as the Charge relay system. Residues 307 to 309 (SKL) carry the Microbody targeting signal motif.

This sequence belongs to the uricase family. As to quaternary structure, homotetramer. In terms of processing, the N-terminus is blocked. In terms of tissue distribution, expressed predominantly in the uninfected cells of the central tissue of the root nodule.

It localises to the peroxisome. It catalyses the reaction urate + O2 + H2O = 5-hydroxyisourate + H2O2. It functions in the pathway purine metabolism; urate degradation; (S)-allantoin from urate: step 1/3. Catalyzes the oxidation of uric acid to 5-hydroxyisourate, which is further processed to form (S)-allantoin. The polypeptide is Uricase-2 isozyme 1 (Glycine max (Soybean)).